The following is a 271-amino-acid chain: MVVAKKSLGQHFLTDESFLDRIVNALPPLNPLKLIEIGVGLGDLTLKLLDRYPLKTYEIDSNLCEKMRSKLKAQKKPFKLELVEKDALFLKEEEPYFLISNLPYYIATRLVLNALKDPKCRGLLVMTQKEVALKFCTKDSQNALSVLVHTIGNATLLFDVPPSAFSPPPKVFSSVFEVIKEPLKEKALASLTQVPFFEEALQKGFETLEDFLKACFSSPRKTLSNNLKKSVSYREKLDKVLDFLALESQPTSVRASEVKDYLKLLEYLLKG.

Residues His-11, Leu-13, Gly-38, Glu-58, Asp-86, and Asn-101 each coordinate S-adenosyl-L-methionine.

This sequence belongs to the class I-like SAM-binding methyltransferase superfamily. rRNA adenine N(6)-methyltransferase family. RsmA subfamily.

Its subcellular location is the cytoplasm. The enzyme catalyses adenosine(1518)/adenosine(1519) in 16S rRNA + 4 S-adenosyl-L-methionine = N(6)-dimethyladenosine(1518)/N(6)-dimethyladenosine(1519) in 16S rRNA + 4 S-adenosyl-L-homocysteine + 4 H(+). Its function is as follows. Specifically dimethylates two adjacent adenosines (A1518 and A1519) in the loop of a conserved hairpin near the 3'-end of 16S rRNA in the 30S particle. May play a critical role in biogenesis of 30S subunits. The sequence is that of Ribosomal RNA small subunit methyltransferase A from Helicobacter pylori (strain P12).